Reading from the N-terminus, the 764-residue chain is 5-methyltetrahydropteroyltriglutamate--homocysteine methyltransferase (764 aa).

Residues 16–19 (RELK) and Lys121 contribute to the 5-methyltetrahydropteroyltri-L-glutamate site. Residues 440–442 (IGS) and Glu493 each bind L-homocysteine. L-methionine contacts are provided by residues 440–442 (IGS) and Glu493. 5-methyltetrahydropteroyltri-L-glutamate is bound by residues 524-525 (RC) and Trp570. Residue Asp608 participates in L-homocysteine binding. Position 608 (Asp608) interacts with L-methionine. Glu614 is a binding site for 5-methyltetrahydropteroyltri-L-glutamate. 3 residues coordinate Zn(2+): His650, Cys652, and Glu674. His703 (proton donor) is an active-site residue. Cys735 is a binding site for Zn(2+).

The protein belongs to the vitamin-B12 independent methionine synthase family. Zn(2+) serves as cofactor.

The catalysed reaction is 5-methyltetrahydropteroyltri-L-glutamate + L-homocysteine = tetrahydropteroyltri-L-glutamate + L-methionine. The protein operates within amino-acid biosynthesis; L-methionine biosynthesis via de novo pathway; L-methionine from L-homocysteine (MetE route): step 1/1. Catalyzes the transfer of a methyl group from 5-methyltetrahydrofolate to homocysteine resulting in methionine formation. The polypeptide is 5-methyltetrahydropteroyltriglutamate--homocysteine methyltransferase (Burkholderia cenocepacia (strain ATCC BAA-245 / DSM 16553 / LMG 16656 / NCTC 13227 / J2315 / CF5610) (Burkholderia cepacia (strain J2315))).